A 193-amino-acid polypeptide reads, in one-letter code: Protein SPEAR3 (193 aa).

2 disordered regions span residues 1–50 and 85–104; these read MGSS…GVAQ and GYPSIPSSSPSFSYASSSPP. A compositionally biased stretch (low complexity) spans 14 to 26; it reads SSSSSPTSSSSSP. The SPL motif lies at 44–52; that stretch reads RGLGVAQLE. The segment covering 86–101 has biased composition (low complexity); that stretch reads YPSIPSSSPSFSYASS. The short motif at 187–193 is the EAR element; it reads LDLELRL.

As to quaternary structure, interacts with TPL and the TPR corepressors TPR1, TPR2, TPR3, TPR4, and with the TCP transcription factors TCP2, TCP3, TCP4, TCP5, TCP10, TCP13, TCP17 and TCP24. Interacts with SPL and SPEAR2. Expressed in shoot apical meristem, cotyledons and leaves. Detected at the leaf margins and in the vascular bundles at the base of the leaves.

It localises to the nucleus. Functionally, transcriptional regulator of leaf development. Acts as an adapter-like transcriptional repressor recruiting TPL/TPR corepressors to inhibit the CIN-like TCP transcription factors. This chain is Protein SPEAR3, found in Arabidopsis thaliana (Mouse-ear cress).